Reading from the N-terminus, the 607-residue chain is Pogo transposable element with KRAB domain (607 aa).

A coiled-coil region spans residues 8–29; that stretch reads LNLTLKEEQKEEEVEIQELEDG. Residue K13 forms a Glycyl lysine isopeptide (Lys-Gly) (interchain with G-Cter in SUMO2) linkage. One can recognise a KRAB domain in the interval 47 to 118; sequence ALFDEVAIYF…DEWRLQGVTF (72 aa). The region spanning 250 to 323 is the HTH CENPB-type domain; sequence AFRGPKNGRF…MRRYDLSLRH (74 aa). One can recognise a DDE-1 domain in the interval 355-567; sequence YEVAQMGNAD…ISSESIVQGF (213 aa). K384 is covalently cross-linked (Glycyl lysine isopeptide (Lys-Gly) (interchain with G-Cter in SUMO2)). The segment at 588-607 is disordered; that stretch reads GELPKEPPKECGPESVAEGD. The span at 589 to 599 shows a compositional bias: basic and acidic residues; sequence ELPKEPPKECG.

It is found in the nucleus. The protein is Pogo transposable element with KRAB domain (Pogk) of Mus musculus (Mouse).